The primary structure comprises 303 residues: MTEIVADKTVEVVKNAIETADGALDLYNKYLDQVIPWQTFDETIKELSRFKQEYSQAASVLVGNIKTLLMDSQDKYFEATQTVYEWCGVATQLLAAYILLFDEYNEKKASAQKDILIKVLDDGITKLNEAQKSLLVSSQSFNNASGKLLALDSQLTNDFSEKSSYFQSQVDKIRKEAYAGAAAGVVAGPFGLIISYSIAAGVVEGKLIPELKNKLKSVQSFFTTLSNTVKQANKDIDAAKLKLTTEIAAIGEIKTETETTRFYVDYDDLMLSLLKEAANKMINTCNEYQKRHGKKTLFEVPEV.

C87 and C285 are joined by a disulfide. A helical transmembrane segment spans residues 183 to 203 (AGVVAGPFGLIISYSIAAGVV).

This sequence belongs to the hemolysin E family. In terms of assembly, monomer and oligomer. In periplasm, it is present as a monomer, while in outer membrane vesicles, it oligomerizes to form a pore structure that is active. The pore is formed by a dodecamer. In terms of processing, in periplasm, it forms a disulfide bond, which prevents the oligomerization. In outer membrane vesicles, the redox status prevents formation of the disulfide bond, leading to oligomerization and pore formation.

The protein localises to the secreted. It is found in the periplasm. Its subcellular location is the host cell membrane. Toxin, which has some hemolytic activity towards mammalian cells. Acts by forming a pore-like structure upon contact with mammalian cells. This chain is Hemolysin E (hlyE), found in Escherichia coli O157:H7.